The following is a 434-amino-acid chain: Epimerase FSL3 (434 aa).

Residue 125 to 126 (GF) participates in substrate binding. Glutamate 392 acts as the Proton acceptor in catalysis.

The protein belongs to the aldose epimerase family. As to quaternary structure, monomer.

The protein operates within secondary metabolite biosynthesis. Its function is as follows. Epimerase; part of the gene cluster that mediates the biosynthesis of fusarielins F, G and H, decaketide compounds with 5 methylations and a decaline core that act as mycoestrogens as they stimulate growth of MCF-7 breast cancer cells. The initial compound in the pathway is produced by the reducing polyketide synthase FSL1. FSL1 lacks an active enoyl reductase (ER) domain and biosynthesis of fusarielins relies on the trans-acting enoyl reductase FSL5, before it is released through hydrolysis catalyzed by the thioesterase FSL2. Fusarielins F, G, and H have a C11=C12 cis double bond and is fully reduced between C10 and C11 and between C12 and C13. FSL3 can be involved in the formation of the C11=C12 cis double bond by moving a hypothetical C10=C11 or C12=C13 trans double bond to form prefusarielin. Prefusarielin is oxygenated at C15 and C16 by the cytochrome P450 monooxygenase FSL4, resulting in fusarielin F, which subsequently is epoxidized into fusarielin G by the same enzyme. The final step in the pathway is a reduction of the carboxylic acid moiety to yield fusarielin H via a still undetermined mechanism. This Gibberella zeae (strain ATCC MYA-4620 / CBS 123657 / FGSC 9075 / NRRL 31084 / PH-1) (Wheat head blight fungus) protein is Epimerase FSL3.